A 456-amino-acid chain; its full sequence is Protein MGA1 (456 aa).

Residues 3 to 118 mediate DNA binding; that stretch reads PKTFVHQLHA…ILNKIQRKST (116 aa). A disordered region spans residues 229–299; sequence SIVQPQQPQQ…QPLPTVPPYS (71 aa). 3 stretches are compositionally biased toward low complexity: residues 231-246, 253-267, and 283-299; these read VQPQ…QALS, SGTL…TTSL, and QQQQ…PPYS.

This sequence belongs to the HSF family.

The protein localises to the nucleus. The polypeptide is Protein MGA1 (MGA1) (Saccharomyces cerevisiae (strain ATCC 204508 / S288c) (Baker's yeast)).